Here is a 195-residue protein sequence, read N- to C-terminus: Imidazoleglycerol-phosphate dehydratase (195 aa).

This sequence belongs to the imidazoleglycerol-phosphate dehydratase family.

The protein localises to the cytoplasm. The enzyme catalyses D-erythro-1-(imidazol-4-yl)glycerol 3-phosphate = 3-(imidazol-4-yl)-2-oxopropyl phosphate + H2O. It functions in the pathway amino-acid biosynthesis; L-histidine biosynthesis; L-histidine from 5-phospho-alpha-D-ribose 1-diphosphate: step 6/9. This chain is Imidazoleglycerol-phosphate dehydratase, found in Geobacillus kaustophilus (strain HTA426).